Consider the following 271-residue polypeptide: Tryptophan synthase alpha chain (271 aa).

Residues Glu56 and Asp67 each act as proton acceptor in the active site.

This sequence belongs to the TrpA family. Tetramer of two alpha and two beta chains.

The catalysed reaction is (1S,2R)-1-C-(indol-3-yl)glycerol 3-phosphate + L-serine = D-glyceraldehyde 3-phosphate + L-tryptophan + H2O. It participates in amino-acid biosynthesis; L-tryptophan biosynthesis; L-tryptophan from chorismate: step 5/5. Functionally, the alpha subunit is responsible for the aldol cleavage of indoleglycerol phosphate to indole and glyceraldehyde 3-phosphate. This Mycobacterium avium (strain 104) protein is Tryptophan synthase alpha chain.